The sequence spans 225 residues: Small ribosomal subunit protein uS2 (225 aa).

Residues 1-13 (MAEAKPALEKEAA) show a composition bias toward basic and acidic residues. Positions 1–33 (MAEAKPALEKEAAVKTGSIPSESEDETASHKEG) are disordered.

It belongs to the universal ribosomal protein uS2 family.

This chain is Small ribosomal subunit protein uS2, found in Methanosarcina acetivorans (strain ATCC 35395 / DSM 2834 / JCM 12185 / C2A).